The primary structure comprises 198 residues: Putative pseudouridine methyltransferase (198 aa).

2 residues coordinate S-adenosyl-L-methionine: Leu-132 and Cys-186.

The protein belongs to the methyltransferase superfamily. TrmY family.

It is found in the cytoplasm. The polypeptide is Putative pseudouridine methyltransferase (Vibrio vulnificus (strain CMCP6)).